The chain runs to 507 residues: MSFPQLGYQYIRPLYPPERPGAAGGGGGGSSAGGRSGPGAGASELAASGSLSNVLSSVYGAPYAAAAAAAAAAQGYGAFLPYATELPIFPQLGAQYELKDSPGVQHPATAAAFPHPHPAFYPYGQYQFGDPSRPKNATRESTSTLKAWLNEHRKNPYPTKGEKIMLAIITKMTLTQVSTWFANARRRLKKENKMTWAPRSRTDEEGNAYGSEREEEDEEEDEEESKRELEMEEEELAGEEEDTGGEGLADDDEDEEIDLENLDSAAAGSELTLAGAAHRNGDFGLGPISDCKTSDSDDSSEGLEDRPLSVLSLAPPPPPVARAPASPPSPPSSLDPCAPAPAPSSALQKPKIWSLAETATSPDNPRRSPPGAGGSPPGAAVAPPTLQLSPAAAAAAAAAHRLVSAPLGKFPAWTNRPFPGPPAGPRPHPLSMLGSAPQHLLGLPGAAGHPAAAAAAYARPAEPESGTDRCSALEVEKKLLKTAFQPVPRRPQNHLDAALVLSALSSS.

Residues 19-39 (RPGAAGGGGGGSSAGGRSGPG) are disordered. Residues 22–39 (AAGGGGGGSSAGGRSGPG) are compositionally biased toward gly residues. Residues 130-192 (DPSRPKNATR…NARRRLKKEN (63 aa)) constitute a DNA-binding region (homeobox; TALE-type). Disordered regions lie at residues 193 to 398 (KMTW…AAAA) and 416 to 468 (RPFP…SGTD). Composition is skewed to acidic residues over residues 213-223 (REEEDEEEDEE) and 230-261 (EMEE…DLEN). 2 stretches are compositionally biased toward pro residues: residues 314 to 342 (APPP…PAPA) and 418 to 428 (FPGPPAGPRPH). 2 positions are modified to phosphoserine: Ser-326 and Ser-329. Low complexity predominate over residues 436–460 (APQHLLGLPGAAGHPAAAAAAYARP).

The protein belongs to the TALE/IRO homeobox family. As to expression, expressed by neural progenitor cells in discrete domains of the ventral neural tube. Also expressed in specific and overlapping patterns with Irx1 and Irx2 in the developing and adult metanephric kidney. In the adult metanephros, renal expression is confined to the S3 segment of the proximal tubule, in the loop of Henle.

The protein localises to the nucleus. Functionally, transcription factor involved in SHH-dependent neural patterning. Together with NKX2-2 and NKX6-1 acts to restrict the generation of motor neurons to the appropriate region of the neural tube. Belongs to the class I proteins of neuronal progenitor factors, which are repressed by SHH signals. Involved in the transcriptional repression of MNX1 in non-motor neuron cells. Acts as a regulator of energy metabolism. This Mus musculus (Mouse) protein is Iroquois-class homeodomain protein IRX-3 (Irx3).